An 86-amino-acid polypeptide reads, in one-letter code: MDAFDVIKMPIISEKTMKLIEEENKLVFYIDKKATKTDVKNAVKELFDVEVKDLNTLITPKGKKKAYIKLKDEYDAGEVAANLGIY.

Belongs to the universal ribosomal protein uL23 family. In terms of assembly, part of the 50S ribosomal subunit. Contacts protein L29.

In terms of biological role, binds to 23S rRNA. One of the proteins that surrounds the polypeptide exit tunnel on the outside of the ribosome. This is Large ribosomal subunit protein uL23 from Methanococcus aeolicus (strain ATCC BAA-1280 / DSM 17508 / OCM 812 / Nankai-3).